The following is a 96-amino-acid chain: Co-chaperonin GroES (96 aa).

This sequence belongs to the GroES chaperonin family. In terms of assembly, heptamer of 7 subunits arranged in a ring. Interacts with the chaperonin GroEL.

It localises to the cytoplasm. In terms of biological role, together with the chaperonin GroEL, plays an essential role in assisting protein folding. The GroEL-GroES system forms a nano-cage that allows encapsulation of the non-native substrate proteins and provides a physical environment optimized to promote and accelerate protein folding. GroES binds to the apical surface of the GroEL ring, thereby capping the opening of the GroEL channel. The chain is Co-chaperonin GroES from Actinobacillus succinogenes (strain ATCC 55618 / DSM 22257 / CCUG 43843 / 130Z).